Reading from the N-terminus, the 440-residue chain is MTFLPQEFIRKVRDRAPLDTADVARFVQGVTAGDVTEGQIAAFAMAVYFNELPLSARIALTLAQRDSGDVLDWRGARLNGPVVDKHSTGGVGDLTSLVIGPMVAACGGYVPMISGRGLGHTGGTLDKLEAIPGYDVAPSVDMLRRVVRDAGLAIVGQTAQLAPADKRIYAVRDVTATVESISLITASILSKKLAAGVSALAMDVKVGSGAFMPSAEQSAELARSIVDVGNGAGMRTAATLTDMNQALAPCAGNAIEVRCAIDFLTGAARPARLEAVSFALAAQMLTMGGLAADAHDARRRLRAVLESGAAAERFARMVAALGGPADLVERPERHLPRAAAAAPVAAARAGWIERIDARALGLAVVGLGGGRAKIGDTLDYSVGLSALAELGERVEAGQPLATVHARDADSAAQATDAVRRAYRIGAEPPAQTRVVHAVIE.

Belongs to the thymidine/pyrimidine-nucleoside phosphorylase family. Homodimer.

The catalysed reaction is thymidine + phosphate = 2-deoxy-alpha-D-ribose 1-phosphate + thymine. It functions in the pathway pyrimidine metabolism; dTMP biosynthesis via salvage pathway; dTMP from thymine: step 1/2. The enzymes which catalyze the reversible phosphorolysis of pyrimidine nucleosides are involved in the degradation of these compounds and in their utilization as carbon and energy sources, or in the rescue of pyrimidine bases for nucleotide synthesis. The sequence is that of Thymidine phosphorylase from Burkholderia pseudomallei (strain 1106a).